The chain runs to 191 residues: Large ribosomal subunit protein uL3 (191 aa).

Residues Ala119–Pro138 are disordered.

This sequence belongs to the universal ribosomal protein uL3 family. In terms of assembly, part of the 50S ribosomal subunit. Forms a cluster with proteins L14 and L19.

Functionally, one of the primary rRNA binding proteins, it binds directly near the 3'-end of the 23S rRNA, where it nucleates assembly of the 50S subunit. This is Large ribosomal subunit protein uL3 (rplC) from Helicobacter pylori (strain ATCC 700392 / 26695) (Campylobacter pylori).